The following is a 251-amino-acid chain: Ubiquinone/menaquinone biosynthesis C-methyltransferase UbiE (251 aa).

Residues Thr-74, Asp-95, and 123–124 (NA) each bind S-adenosyl-L-methionine.

This sequence belongs to the class I-like SAM-binding methyltransferase superfamily. MenG/UbiE family.

The enzyme catalyses a 2-demethylmenaquinol + S-adenosyl-L-methionine = a menaquinol + S-adenosyl-L-homocysteine + H(+). The catalysed reaction is a 2-methoxy-6-(all-trans-polyprenyl)benzene-1,4-diol + S-adenosyl-L-methionine = a 5-methoxy-2-methyl-3-(all-trans-polyprenyl)benzene-1,4-diol + S-adenosyl-L-homocysteine + H(+). The protein operates within quinol/quinone metabolism; menaquinone biosynthesis; menaquinol from 1,4-dihydroxy-2-naphthoate: step 2/2. It participates in cofactor biosynthesis; ubiquinone biosynthesis. Methyltransferase required for the conversion of demethylmenaquinol (DMKH2) to menaquinol (MKH2) and the conversion of 2-polyprenyl-6-methoxy-1,4-benzoquinol (DDMQH2) to 2-polyprenyl-3-methyl-6-methoxy-1,4-benzoquinol (DMQH2). This chain is Ubiquinone/menaquinone biosynthesis C-methyltransferase UbiE, found in Edwardsiella ictaluri (strain 93-146).